Here is a 1238-residue protein sequence, read N- to C-terminus: DNA-directed RNA polymerase subunit beta (1238 aa).

It belongs to the RNA polymerase beta chain family. The RNAP catalytic core consists of 2 alpha, 1 beta, 1 beta' and 1 omega subunit. When a sigma factor is associated with the core the holoenzyme is formed, which can initiate transcription.

The enzyme catalyses RNA(n) + a ribonucleoside 5'-triphosphate = RNA(n+1) + diphosphate. Its function is as follows. DNA-dependent RNA polymerase catalyzes the transcription of DNA into RNA using the four ribonucleoside triphosphates as substrates. The protein is DNA-directed RNA polymerase subunit beta of Clostridioides difficile (strain 630) (Peptoclostridium difficile).